A 147-amino-acid polypeptide reads, in one-letter code: SsrA-binding protein (147 aa).

Belongs to the SmpB family.

It localises to the cytoplasm. Required for rescue of stalled ribosomes mediated by trans-translation. Binds to transfer-messenger RNA (tmRNA), required for stable association of tmRNA with ribosomes. tmRNA and SmpB together mimic tRNA shape, replacing the anticodon stem-loop with SmpB. tmRNA is encoded by the ssrA gene; the 2 termini fold to resemble tRNA(Ala) and it encodes a 'tag peptide', a short internal open reading frame. During trans-translation Ala-aminoacylated tmRNA acts like a tRNA, entering the A-site of stalled ribosomes, displacing the stalled mRNA. The ribosome then switches to translate the ORF on the tmRNA; the nascent peptide is terminated with the 'tag peptide' encoded by the tmRNA and targeted for degradation. The ribosome is freed to recommence translation, which seems to be the essential function of trans-translation. The sequence is that of SsrA-binding protein from Mycoplasmopsis agalactiae (strain NCTC 10123 / CIP 59.7 / PG2) (Mycoplasma agalactiae).